Reading from the N-terminus, the 578-residue chain is Proteasome-associated ATPase (578 aa).

Positions 8-84 (TAAELRNQVR…LKEEVDRLAQ (77 aa)) form a coiled coil. 267–272 (GCGKTL) is an ATP binding site. Residues 577–578 (YL) are docks into pockets in the proteasome alpha-ring.

This sequence belongs to the AAA ATPase family. In terms of assembly, homohexamer. Assembles into a hexameric ring structure that caps the 20S proteasome core. Strongly interacts with the prokaryotic ubiquitin-like protein Pup through a hydrophobic interface; the interacting region of ARC lies in its N-terminal coiled-coil domain. There is one Pup binding site per ARC hexamer ring. Upon ATP-binding, the C-terminus of ARC interacts with the alpha-rings of the proteasome core, possibly by binding to the intersubunit pockets.

The protein operates within protein degradation; proteasomal Pup-dependent pathway. In terms of biological role, ATPase which is responsible for recognizing, binding, unfolding and translocation of pupylated proteins into the bacterial 20S proteasome core particle. May be essential for opening the gate of the 20S proteasome via an interaction with its C-terminus, thereby allowing substrate entry and access to the site of proteolysis. Thus, the C-termini of the proteasomal ATPase may function like a 'key in a lock' to induce gate opening and therefore regulate proteolysis. In Kribbella flavida (strain DSM 17836 / JCM 10339 / NBRC 14399), this protein is Proteasome-associated ATPase.